A 204-amino-acid polypeptide reads, in one-letter code: Linker for activation of T-cells family member 2 (204 aa).

Residues 1 to 7 are Extracellular-facing; the sequence is MNAELEL. The chain crosses the membrane as a helical; Signal-anchor for type III membrane protein span at residues 8–28; the sequence is LWPLSGLLLLLLLGTTAWLCV. S-palmitoyl cysteine attachment occurs at residues cysteine 27 and cysteine 30. Residues 29-204 are Cytoplasmic-facing; it reads QCSRPGVKRN…NGDVATTEKI (176 aa). Position 60 is a phosphotyrosine (tyrosine 60). Serine 61 and serine 96 each carry phosphoserine. Phosphotyrosine is present on residues tyrosine 140, tyrosine 161, and tyrosine 193. The tract at residues 147–204 is disordered; the sequence is KPSTPESGTEESEDYQNSVSILQWRESKRTMGARTSPSGSPDEEPDYVNGDVATTEKI.

When phosphorylated, interacts with GRB2. May also interact with SOS1, GAB1 and CBL. Post-translationally, phosphorylated on tyrosines following cross-linking of BCR in B-cells, high affinity IgG receptor (FCGR1) in myeloid cells, or high affinity IgE receptor (FCER1) in mast cells; which induces the recruitment of GRB2.

It localises to the cell membrane. Its function is as follows. Involved in FCER1 (high affinity immunoglobulin epsilon receptor)-mediated signaling in mast cells. May also be involved in BCR (B-cell antigen receptor)-mediated signaling in B-cells and FCGR1 (high affinity immunoglobulin gamma Fc receptor I)-mediated signaling in myeloid cells. Couples activation of these receptors and their associated kinases with distal intracellular events through the recruitment of GRB2. In Rattus norvegicus (Rat), this protein is Linker for activation of T-cells family member 2 (Lat2).